The primary structure comprises 1902 residues: PI-type proteinase (1902 aa).

An N-terminal signal peptide occupies residues 1–33 (MQRKKKGLSILLAGTVALGALAVLPVGEIQAKA). Residues 34-187 (AISQQTKGSS…VTLAKVYYPT (154 aa)) constitute a propeptide that is removed on maturation. The 507-residue stretch at 191-697 (ANSMANVQAV…AGLVDVKAAI (507 aa)) folds into the Peptidase S8 domain. Catalysis depends on charge relay system residues Asp217, His281, and Ser620. The segment at 1796-1874 (GKGDGTTGTS…GALPKTGETT (79 aa)) is disordered. The segment covering 1797–1812 (KGDGTTGTSDKGGGQG) has biased composition (gly residues). Residues 1830–1843 (SQPSSGGNIPTNPA) show a composition bias toward polar residues. The LPXTG sorting signal motif lies at 1867–1871 (LPKTG). At Thr1870 the chain carries Pentaglycyl murein peptidoglycan amidated threonine. Positions 1871-1902 (GETTERPAFGFLGVIVVILMGVLGLKRKQREE) are cleaved as a propeptide — removed by sortase.

The protein belongs to the peptidase S8 family.

It localises to the secreted. Its subcellular location is the cell wall. The enzyme catalyses Endopeptidase activity with very broad specificity, although some subsite preference have been noted, e.g. large hydrophobic residues in the P1 and P4 positions, and Pro in the P2 position. Best known for its action on caseins, although it has been shown to hydrolyze hemoglobin and oxidized insulin B-chain.. Functionally, protease which breaks down milk proteins during the growth of the bacteria on milk. The sequence is that of PI-type proteinase (prtP) from Lactococcus lactis subsp. cremoris (Streptococcus cremoris).